Here is a 735-residue protein sequence, read N- to C-terminus: Photosystem I P700 chlorophyll a apoprotein A2 (735 aa).

Transmembrane regions (helical) follow at residues 47-70 (IFAS…FHVA), 136-159 (LFTG…LHLQ), 176-200 (LNHH…HVAI), 274-292 (MAHH…GHMY), 331-354 (LHFQ…QHIY), 370-396 (AALY…IFFI), 418-440 (AIIS…LYVH), and 518-536 (FLVH…LILV). [4Fe-4S] cluster contacts are provided by Cys560 and Cys569. A run of 2 helical transmembrane segments spans residues 576–597 (AFYL…YFHW) and 644–666 (LSVW…MFLI). Positions 655, 663, and 671 each coordinate chlorophyll a. Trp672 serves as a coordination point for phylloquinone. Residues 708-728 (LVGLVHFSVGYIFTYAAFLIA) form a helical membrane-spanning segment.

The protein belongs to the PsaA/PsaB family. As to quaternary structure, the PsaA/B heterodimer binds the P700 chlorophyll special pair and subsequent electron acceptors. PSI consists of a core antenna complex that captures photons, and an electron transfer chain that converts photonic excitation into a charge separation. The eukaryotic PSI reaction center is composed of at least 11 subunits. P700 is a chlorophyll a/chlorophyll a' dimer, A0 is one or more chlorophyll a, A1 is one or both phylloquinones and FX is a shared 4Fe-4S iron-sulfur center. is required as a cofactor.

The protein resides in the plastid. The protein localises to the chloroplast thylakoid membrane. The enzyme catalyses reduced [plastocyanin] + hnu + oxidized [2Fe-2S]-[ferredoxin] = oxidized [plastocyanin] + reduced [2Fe-2S]-[ferredoxin]. In terms of biological role, psaA and PsaB bind P700, the primary electron donor of photosystem I (PSI), as well as the electron acceptors A0, A1 and FX. PSI is a plastocyanin/cytochrome c6-ferredoxin oxidoreductase, converting photonic excitation into a charge separation, which transfers an electron from the donor P700 chlorophyll pair to the spectroscopically characterized acceptors A0, A1, FX, FA and FB in turn. Oxidized P700 is reduced on the lumenal side of the thylakoid membrane by plastocyanin or cytochrome c6. The sequence is that of Photosystem I P700 chlorophyll a apoprotein A2 from Chlamydomonas moewusii (Chlamydomonas eugametos).